The chain runs to 578 residues: Vesicular acetylcholine transporter (578 aa).

The Cytoplasmic portion of the chain corresponds to 1 to 32; it reads MASFQIPVINLEVREVKDIVWEKIQEPVNQRR. Residues 33–53 form a helical membrane-spanning segment; that stretch reads LILVIVSIALLLDNMLYMVIV. The Lumenal, vesicle segment spans residues 54 to 98; it reads PIIPDYLREIGSFDDGPTPPPLRDNITGKIIPVHHDHHGQDSATG. Residue asparagine 78 is glycosylated (N-linked (GlcNAc...) asparagine). Residues 99–119 traverse the membrane as a helical segment; the sequence is ILFASKAIVQLMVNPFSGGLI. The Cytoplasmic segment spans residues 120–125; it reads DKIGYD. A helical transmembrane segment spans residues 126–146; that stretch reads LPMMIGLTIMFFSTAVFACGS. The Lumenal, vesicle portion of the chain corresponds to 147–154; that stretch reads SYSVLFFA. The helical transmembrane segment at 155 to 175 threads the bilayer; it reads RSLQGAGSAFADTAGLAMIAD. The Cytoplasmic segment spans residues 176–187; it reads RFTEENERSQAL. Residues 188–208 traverse the membrane as a helical segment; it reads GIALAFISFGCLVAPPFGGAL. Residues 209-215 lie on the Lumenal, vesicle side of the membrane; it reads YQFAGKE. The helical transmembrane segment at 216 to 236 threads the bilayer; the sequence is VPFLILALVCLLDGLMLLLVM. The Cytoplasmic portion of the chain corresponds to 237–263; that stretch reads KPVKEAMKQSKDVQDQVIPIWRLLMDP. The chain crosses the membrane as a helical span at residues 264 to 284; sequence YIAVCAGALTMSNVALAFLEP. Residues 285-299 are Lumenal, vesicle-facing; that stretch reads TISLWMEDNMTTDNW. N-linked (GlcNAc...) asparagine glycosylation occurs at asparagine 293. A helical transmembrane segment spans residues 300-320; that stretch reads KIGMVWLPAFFPHVLGVVITV. Topologically, residues 321 to 330 are cytoplasmic; sequence KMARKYPQHQ. The chain crosses the membrane as a helical span at residues 331 to 351; that stretch reads WLMAAGGLALEGFSCFIIPFC. Residues 352–355 are Lumenal, vesicle-facing; that stretch reads SGYK. The helical transmembrane segment at 356-376 threads the bilayer; sequence MLMLPICVICFGIALIDTALL. Residues 377–387 lie on the Cytoplasmic side of the membrane; it reads PTLGYLVDVRY. A helical membrane pass occupies residues 388–408; it reads VSVYGSIYAIADISYSIAYAV. Residues 409 to 413 lie on the Lumenal, vesicle side of the membrane; that stretch reads GPIIA. A helical transmembrane segment spans residues 414–434; that stretch reads GGVVEAIGFTALNFLIAFSNL. At 435 to 578 the chain is on the cytoplasmic side; that stretch reads AYVPVLRKLR…APANPFRQGF (144 aa). Composition is skewed to low complexity over residues 507 to 534 and 549 to 563; these read EYQQQQQGYQQGYQQDQGYQPGYQEQGG and QQQQQQQQQQQQQVQ. A disordered region spans residues 507 to 578; that stretch reads EYQQQQQGYQ…APANPFRQGF (72 aa).

This sequence belongs to the major facilitator superfamily. Vesicular transporter family.

It is found in the membrane. Involved in acetylcholine transport into synaptic vesicles. The sequence is that of Vesicular acetylcholine transporter (VAChT) from Drosophila melanogaster (Fruit fly).